A 556-amino-acid polypeptide reads, in one-letter code: 2-succinyl-5-enolpyruvyl-6-hydroxy-3-cyclohexene-1-carboxylate synthase (556 aa).

This sequence belongs to the TPP enzyme family. MenD subfamily. In terms of assembly, homodimer. Mg(2+) is required as a cofactor. It depends on Mn(2+) as a cofactor. The cofactor is thiamine diphosphate.

It carries out the reaction isochorismate + 2-oxoglutarate + H(+) = 5-enolpyruvoyl-6-hydroxy-2-succinyl-cyclohex-3-ene-1-carboxylate + CO2. Its pathway is quinol/quinone metabolism; 1,4-dihydroxy-2-naphthoate biosynthesis; 1,4-dihydroxy-2-naphthoate from chorismate: step 2/7. It functions in the pathway quinol/quinone metabolism; menaquinone biosynthesis. Functionally, catalyzes the thiamine diphosphate-dependent decarboxylation of 2-oxoglutarate and the subsequent addition of the resulting succinic semialdehyde-thiamine pyrophosphate anion to isochorismate to yield 2-succinyl-5-enolpyruvyl-6-hydroxy-3-cyclohexene-1-carboxylate (SEPHCHC). The chain is 2-succinyl-5-enolpyruvyl-6-hydroxy-3-cyclohexene-1-carboxylate synthase from Staphylococcus epidermidis (strain ATCC 12228 / FDA PCI 1200).